Here is a 248-residue protein sequence, read N- to C-terminus: Large ribosomal subunit protein uL4 (248 aa).

The segment at 69–92 (HVPRLKNGSRAAKVPQAKGGREAH) is disordered.

Belongs to the universal ribosomal protein uL4 family. Part of the 50S ribosomal subunit.

One of the primary rRNA binding proteins, this protein initially binds near the 5'-end of the 23S rRNA. It is important during the early stages of 50S assembly. It makes multiple contacts with different domains of the 23S rRNA in the assembled 50S subunit and ribosome. In terms of biological role, forms part of the polypeptide exit tunnel. The protein is Large ribosomal subunit protein uL4 of Methanoregula boonei (strain DSM 21154 / JCM 14090 / 6A8).